Here is a 2264-residue protein sequence, read N- to C-terminus: MSVTLSPSGDCFSFNHVKYNNSLNKYLFYNSNLDIVLDDFDFYFNFYVKKYNVLLSFFSDRVLSALYTSMSVSEAASLAMEDFCELALDELKINPFHQLWEETLANWPVYPGTSLLDFCRTQYEIRREAAEASAEILRLKEVARQRAFDDEVEFLIKHGAKVHFAPSFAAQLWRAGKDQKKCRGILLGKLNKAKALGEAHRSAVARAQAKAEVLREFEPSPQQIQRALEAQIFADRLSRKYAALTARVRAKRAAARELREKELFLETQDLLNAPLLPPMEKVGIERKYRKVRPTGSNVTSTPKPNVLENLCPFMGLGAKTADVRCQATLMAGKIHPQYPRLASAIYAWVLGPSMKFECIAPVKTFIKGLTFMVDYFPEEVLIDELNKINSEARCFEASLVLEEERAKLEAHAENANCRANIFMKAMAGVKNMAKCAYSGFLTGCEEAGRSLSEGVCSVMINSFRECIKMIHKELGCAMELIEVMIKKVKDWYNSMLEKLHCGLATLGTYAMYALAILLGCGLTTLLERCIGGAGILTKLFVTGVFAAIGLHAAGGFDGLQREMVQMCTALAAGIFDVHHKGNGKYSPMADILAEQRLEDRRADNVRSIPIISGIISAMQQFGTGLCSMHSISLIEIGKLGAACHSMRMGKEALKEFCATIMYYLGRISDKVTGRETVFFDELSTLVSVDVRGWILCAQSCIRESFHTEIGNQFFRDMVAQLVDDGQKLQVGVNGIPRKISTDYSQLSSDTEGPNELHKRTIRAGISEGRRCEPVWIYLFGQRHCGKSNFMATLDNALAKHFGLPNTTAYRNCKDSFFSGYSGQTFFHVDDLSSVKLDPPMEAEMINLVSCQEVPLNMADLADKPIYFRSPFIISSSNFEDVPAGCGVRDIEAYRSRKACLVEMRRKPGVLFDPDNPLLASQARFKDPMSQMLLEGQTEENSWLEMEDVVTEIINISARHRAAQEKLQARYMREKSLLDPLALAAENFLKGEVQTHILIFLVLNLKSWNPKPQGGRGLYVDGSLYLLDPTFQFEEIPITDDGYKRLWDERMRKSFLSKIQTGEYLNSKSMVVTGFLRSLVNGDCAVLSKDTLSSSASVAQQSIFKALGIDERIYLRTLQHQLDLYSADIPENPYSNSAWIKILKAIGMGRTYLAENGCGILMIAAALILILVSAWGFWKLFIGLFSGSMSLGAAIVGMSAVDIKAQQKSSSQEGGYRARNIPIHHRYAYAKSQAGDGLLPAARFVCCYLSTGGGFVSAMQYKNKSVRMTRHQALRFQEGEQLTVIFSSTGESQLIRWHKYMMREEPGSEIVTWLAPSLPSLSPDLKDLFLEDKEVDLPNHFKTIGYVLRVDNTAFHYDLLDTYAAVDKTPLPLKGVVGNELYLHEIPEKITFHYESRNDDCGMIILCQIKGKMRVVGMLVAGKDKTSWADIMPPNTLAELQSQIEYIPKFGEAYDGFFKAGYVPMADAPTLPKKTNMVPVPQSLRVPCDVPIKEPAVLTNADKRCPAGVNPPVTALKKKFEHPMKELEQEILDEVATDILETWYDCEDHVLNDIPLVVAINGIPADSEEAELENFVMKTSPGYPYFKNNRAEKLKGKSAYFEEAEDGTLKLKEGGMAAKLHENLVEFTKNEVPELVVIECTKDELLPERKIKVGACRLFEIMPLHYNLFLRQKTCAFTQFLQHNRHVLPCQVGTNPYSREWGHMLNRLMRPKTNEAINCDYSGFDGLLNAQVIECIAKMINRLYALSGESEVQQAQRYNMLMALVGRYAFVGPEVYKVNCGLPSGFALTVVVNSVFNEILIRYAYKKLAPKPERNRFNQVVCLLVYGDDNLISVSPSIASWFTGEAIRITLAEKKVKITDGSDKDAPTIEAKSFWELDFLKRKFLKLDNGIVQAPLDRSAIFSSLYWLTPDKSKFHASQRASDFQGTVDVVEELILNVNVALMELYLHNDPREFSRVRDFYIKALPLATGQFRTWAFCEAFHSAQQTGMLKYDPAKVLDHMSGLDFKKFMHVSEQGNKAHFYTEMLGVAGPHYKPQENDFIVSTEPLKMGVCGEHVPIQYGSGVGGLPTKKWVLDFGRPSQLKNKLGYLIHPILRAQIEAGKRLVFMSPAPYVANNAALIAFGTGGKMLIQKDALVHYRNVIPESTSGLEQYFDAPLPTATIGTFYFANGETYAALCEYKEGKVLNYEGFPTLILNEAAKDRKVPCMVATQAKTKFKVSLACDSTMCPHHTAVCETYEKAFRHCWLAKCKTSAVKVSPWHGTKLS.

Residues 566–1156 lie on the Cytoplasmic side of the membrane; the sequence is MCTALAAGIF…MGRTYLAENG (591 aa). An SF3 helicase domain is found at 750–916; it reads TEGPNELHKR…PGVLFDPDNP (167 aa). 780–787 contributes to the ATP binding site; the sequence is GQRHCGKS. Residues 1157–1177 traverse the membrane as a helical segment; it reads CGILMIAAALILILVSAWGFW. Residues 1178-1203 lie on the Lumenal side of the membrane; it reads KLFIGLFSGSMSLGAAIVGMSAVDIK. The Peptidase C3 domain occupies 1227 to 1436; sequence AYAKSQAGDG…WADIMPPNTL (210 aa). Catalysis depends on for picornain 3C-like protease activity residues His1270, Glu1308, and Cys1400. The RdRp catalytic domain maps to 1713–1841; sequence NEAINCDYSG…SVSPSIASWF (129 aa).

Belongs to the nepoviruses RNA1 polyprotein family. Post-translationally, specific enzymatic cleavages by picornain 3C-like protease in vivo yield mature proteins. Picornain 3C-like protease is autocatalytically processed. VPg is uridylylated by the polymerase and is covalently linked to the 5'-end of genomic RNA. This uridylylated form acts as a nucleotide-peptide primer for the polymerase.

The protein localises to the host endoplasmic reticulum lumen. The protein resides in the host endoplasmic reticulum membrane. The catalysed reaction is RNA(n) + a ribonucleoside 5'-triphosphate = RNA(n+1) + diphosphate. Its function is as follows. Picornain 3C-like protease is a thiol protease that cleaves the P1 and P2 polyproteins. The polypeptide is RNA1 polyprotein (Beet ringspot virus (BRSV)).